The chain runs to 91 residues: UPF0250 protein NGK_1021 (91 aa).

This sequence belongs to the UPF0250 family.

This chain is UPF0250 protein NGK_1021, found in Neisseria gonorrhoeae (strain NCCP11945).